The following is a 217-amino-acid chain: Probable GTP-binding protein EngB (217 aa).

The EngB-type G domain maps to 29 to 213 (GPPEVAFAGR…RQAIAETVGI (185 aa)). Residues 37–44 (GRSNVGKS), 64–68 (GRTQE), 91–94 (DMPG), 158–161 (TKTD), and 192–194 (TSS) contribute to the GTP site. 2 residues coordinate Mg(2+): Ser44 and Thr66.

It belongs to the TRAFAC class TrmE-Era-EngA-EngB-Septin-like GTPase superfamily. EngB GTPase family. It depends on Mg(2+) as a cofactor.

In terms of biological role, necessary for normal cell division and for the maintenance of normal septation. This Rhizobium etli (strain ATCC 51251 / DSM 11541 / JCM 21823 / NBRC 15573 / CFN 42) protein is Probable GTP-binding protein EngB.